Reading from the N-terminus, the 174-residue chain is Gamma-crystallin C (174 aa).

Beta/gamma crystallin 'Greek key' domains lie at 2–40 and 41–83; these read GKIT…RVDS and GCWM…RLIP. Cys23 bears the S-methylcysteine mark. Positions 84 to 87 are connecting peptide; the sequence is HAGS. Beta/gamma crystallin 'Greek key' domains are found at residues 88–128 and 129–171; these read HRMR…QVLE and GCWV…RRVV.

The protein belongs to the beta/gamma-crystallin family.

In terms of biological role, crystallins are the dominant structural components of the vertebrate eye lens. This is Gamma-crystallin C (Crygc) from Mus musculus (Mouse).